The sequence spans 179 residues: Adaptation to cold protein A (179 aa).

The interval 133 to 179 is disordered; it reads KATPAPKRSADDDFEDEDSDYADYSDDDDDEGEEEDGYYDHYDDEDR. The span at 144–179 shows a compositional bias: acidic residues; sequence DDFEDEDSDYADYSDDDDDEGEEEDGYYDHYDDEDR.

Functionally, part of an operon involved in cold adaptation. The protein is Adaptation to cold protein A of Shewanella oneidensis (strain ATCC 700550 / JCM 31522 / CIP 106686 / LMG 19005 / NCIMB 14063 / MR-1).